The sequence spans 314 residues: MAGNSQRRGAVRKPGTKKGPTVGSGGVRRRGLEGRGATPPAHMRPNHPAAKKARAAAKAQQQRAGRKADETELVLGRNPVLECLRAKVPATALYVALGTDADERVTESVQIAADRGISILEVPRTDLDRMSNHGLHQGLGLQVPPYAYAHPDDLLATARADAAPALLVALDNISDPRNLGAIVRSVAAFAGHGVVIPQRRSASVTAVAWRTSAGAAARVPVARATNLNRTLKSFADAGLQIVGLDAGGDTTLDELDATGPTVVVVGSEGKGLSRLVREHCDAIVSIPMAGPTESLNASVAAGVVLAEIARQRRS.

Residues 1–71 (MAGNSQRRGA…QRAGRKADET (71 aa)) form a disordered region. S-adenosyl-L-methionine-binding residues include glycine 266, isoleucine 286, and leucine 295.

It belongs to the class IV-like SAM-binding methyltransferase superfamily. RNA methyltransferase TrmH family.

This is an uncharacterized protein from Mycolicibacterium smegmatis (strain ATCC 700084 / mc(2)155) (Mycobacterium smegmatis).